A 241-amino-acid polypeptide reads, in one-letter code: Probable 2-phosphosulfolactate phosphatase (241 aa).

It belongs to the ComB family. Mg(2+) is required as a cofactor.

It carries out the reaction (2R)-O-phospho-3-sulfolactate + H2O = (2R)-3-sulfolactate + phosphate. This Microcystis aeruginosa (strain NIES-843 / IAM M-2473) protein is Probable 2-phosphosulfolactate phosphatase.